We begin with the raw amino-acid sequence, 469 residues long: ATP sulfurylase 4, chloroplastic (469 aa).

The transit peptide at 1-51 (MASSAAAIVSGSPFRSSPLIHNHHASRYAPGSISVVSLPRQVSRRGLSVKS) directs the protein to the chloroplast.

It belongs to the sulfate adenylyltransferase family. Homotetramer. In terms of tissue distribution, expressed in roots and leaves.

It is found in the plastid. The protein resides in the chloroplast stroma. It carries out the reaction sulfate + ATP + H(+) = adenosine 5'-phosphosulfate + diphosphate. It participates in sulfur metabolism; hydrogen sulfide biosynthesis; sulfite from sulfate: step 1/3. Its function is as follows. Sulfate adenylyltransferase. Catalyzes the first step of the sulfate assimilation pathway. In Arabidopsis thaliana (Mouse-ear cress), this protein is ATP sulfurylase 4, chloroplastic (APS4).